The primary structure comprises 416 residues: UPF0761 membrane protein Rfer_2991 (416 aa).

A run of 6 helical transmembrane segments spans residues 60–80 (MALV…PMFA), 117–137 (LGGA…LTID), 156–176 (VLVY…SLSI), 187–207 (VVGV…FFMV), 222–242 (WVKW…LELA), and 268–288 (ILLI…VIAA).

Belongs to the UPF0761 family.

The protein localises to the cell inner membrane. This chain is UPF0761 membrane protein Rfer_2991, found in Albidiferax ferrireducens (strain ATCC BAA-621 / DSM 15236 / T118) (Rhodoferax ferrireducens).